The primary structure comprises 718 residues: Polyribonucleotide nucleotidyltransferase (718 aa).

Positions 497 and 503 each coordinate Mg(2+). One can recognise a KH domain in the interval 564 to 623 (PRLLTMKIDPEQIGLVIGPGGKTIKGITEQTGSKIDIADDGTVTIAALEAEKAEKAKQII). The S1 motif domain occupies 633–701 (GEVYMGRVTR…AKGRLNLTRL (69 aa)).

It belongs to the polyribonucleotide nucleotidyltransferase family. It depends on Mg(2+) as a cofactor.

It is found in the cytoplasm. The catalysed reaction is RNA(n+1) + phosphate = RNA(n) + a ribonucleoside 5'-diphosphate. Functionally, involved in mRNA degradation. Catalyzes the phosphorolysis of single-stranded polyribonucleotides processively in the 3'- to 5'-direction. The polypeptide is Polyribonucleotide nucleotidyltransferase (Rippkaea orientalis (strain PCC 8801 / RF-1) (Cyanothece sp. (strain PCC 8801))).